Reading from the N-terminus, the 127-residue chain is Large ribosomal subunit protein bL17 (127 aa).

It belongs to the bacterial ribosomal protein bL17 family. Part of the 50S ribosomal subunit. Contacts protein L32.

This chain is Large ribosomal subunit protein bL17, found in Leuconostoc mesenteroides subsp. mesenteroides (strain ATCC 8293 / DSM 20343 / BCRC 11652 / CCM 1803 / JCM 6124 / NCDO 523 / NBRC 100496 / NCIMB 8023 / NCTC 12954 / NRRL B-1118 / 37Y).